We begin with the raw amino-acid sequence, 420 residues long: UDP-N-acetylglucosamine 1-carboxyvinyltransferase (420 aa).

22–23 (KN) serves as a coordination point for phosphoenolpyruvate. Residue Arg93 participates in UDP-N-acetyl-alpha-D-glucosamine binding. Cys117 functions as the Proton donor in the catalytic mechanism. At Cys117 the chain carries 2-(S-cysteinyl)pyruvic acid O-phosphothioketal. UDP-N-acetyl-alpha-D-glucosamine is bound by residues 122-126 (RPVDL), Asp307, and Val329.

This sequence belongs to the EPSP synthase family. MurA subfamily.

The protein localises to the cytoplasm. The enzyme catalyses phosphoenolpyruvate + UDP-N-acetyl-alpha-D-glucosamine = UDP-N-acetyl-3-O-(1-carboxyvinyl)-alpha-D-glucosamine + phosphate. It participates in cell wall biogenesis; peptidoglycan biosynthesis. Cell wall formation. Adds enolpyruvyl to UDP-N-acetylglucosamine. The chain is UDP-N-acetylglucosamine 1-carboxyvinyltransferase from Hahella chejuensis (strain KCTC 2396).